The chain runs to 808 residues: DNA ligase (808 aa).

Positions 1-30 are disordered; the sequence is MSISDDISPVPPAPVSEPNAGQDAGQDAAP. The segment covering 18–30 has biased composition (low complexity); that stretch reads PNAGQDAGQDAAP. Residues 61–65, 110–111, and Asp-141 contribute to the NAD(+) site; these read DAEYD and SL. The N6-AMP-lysine intermediate role is filled by Lys-143. Positions 164, 202, 334, and 358 each coordinate NAD(+). Zn(2+) is bound by residues Cys-453, Cys-456, Cys-471, and Cys-476. Residues 644 to 733 enclose the BRCT domain; that stretch reads EGSGPLAGLR…GGDVPEDGDG (90 aa). Residues 720-808 are disordered; sequence LEGRGGDVPE…PRKKDQHSLL (89 aa). The span at 727–742 shows a compositional bias: acidic residues; the sequence is VPEDGDGAPGNEDEAP. A compositionally biased stretch (low complexity) spans 746–773; the sequence is ADVPAAPEVLADAPAAISADASSGVAPG. The segment covering 779–792 has biased composition (basic and acidic residues); that stretch reads DRADMTDRTVRTDS.

It belongs to the NAD-dependent DNA ligase family. LigA subfamily. Mg(2+) is required as a cofactor. Requires Mn(2+) as cofactor.

The catalysed reaction is NAD(+) + (deoxyribonucleotide)n-3'-hydroxyl + 5'-phospho-(deoxyribonucleotide)m = (deoxyribonucleotide)n+m + AMP + beta-nicotinamide D-nucleotide.. Functionally, DNA ligase that catalyzes the formation of phosphodiester linkages between 5'-phosphoryl and 3'-hydroxyl groups in double-stranded DNA using NAD as a coenzyme and as the energy source for the reaction. It is essential for DNA replication and repair of damaged DNA. In Nitratidesulfovibrio vulgaris (strain DSM 19637 / Miyazaki F) (Desulfovibrio vulgaris), this protein is DNA ligase.